We begin with the raw amino-acid sequence, 447 residues long: GTPase Der (447 aa).

EngA-type G domains lie at 3-167 (PVIA…HLAD) and 180-353 (IRLA…ASAN). GTP is bound by residues 9–16 (GRPNVGKS), 56–60 (DTGGF), 119–122 (NKAE), 186–193 (GRPNVGKS), 233–237 (DTAGL), and 298–301 (NKWD). Positions 354-438 (RKMSTPVLTR…PMRIQMKSSH (85 aa)) constitute a KH-like domain.

It belongs to the TRAFAC class TrmE-Era-EngA-EngB-Septin-like GTPase superfamily. EngA (Der) GTPase family. Associates with the 50S ribosomal subunit.

In terms of biological role, GTPase that plays an essential role in the late steps of ribosome biogenesis. The sequence is that of GTPase Der from Polaromonas sp. (strain JS666 / ATCC BAA-500).